Here is a 620-residue protein sequence, read N- to C-terminus: 1-deoxy-D-xylulose-5-phosphate synthase (620 aa).

Residues His80 and 121 to 123 each bind thiamine diphosphate; that span reads GHS. Asp152 contacts Mg(2+). Thiamine diphosphate contacts are provided by residues 153–154, Asn181, Tyr288, and Glu370; that span reads GA. A Mg(2+)-binding site is contributed by Asn181.

This sequence belongs to the transketolase family. DXPS subfamily. As to quaternary structure, homodimer. It depends on Mg(2+) as a cofactor. Thiamine diphosphate is required as a cofactor.

It catalyses the reaction D-glyceraldehyde 3-phosphate + pyruvate + H(+) = 1-deoxy-D-xylulose 5-phosphate + CO2. The protein operates within metabolic intermediate biosynthesis; 1-deoxy-D-xylulose 5-phosphate biosynthesis; 1-deoxy-D-xylulose 5-phosphate from D-glyceraldehyde 3-phosphate and pyruvate: step 1/1. In terms of biological role, catalyzes the acyloin condensation reaction between C atoms 2 and 3 of pyruvate and glyceraldehyde 3-phosphate to yield 1-deoxy-D-xylulose-5-phosphate (DXP). In Shigella boydii serotype 18 (strain CDC 3083-94 / BS512), this protein is 1-deoxy-D-xylulose-5-phosphate synthase.